The primary structure comprises 417 residues: Cobalamin binding intrinsic factor (417 aa).

The N-terminal stretch at 1-18 is a signal peptide; it reads MAWFALYLLSLLWATAGT. 3 cysteine pairs are disulfide-bonded: Cys-26–Cys-246, Cys-103–Cys-288, and Cys-143–Cys-182. Asp-171 provides a ligand contact to cob(II)alamin. At Ser-191 the chain carries Phosphoserine. Cob(II)alamin is bound by residues Asp-222 and Gln-270. N-linked (GlcNAc...) asparagine glycosylation is found at Asn-311, Asn-330, and Asn-334. Residues 365-370 and 386-395 contribute to the cob(II)alamin site; these read SWGLVV and WQFLSGVTPL. A glycan (N-linked (GlcNAc...) asparagine) is linked at Asn-413.

This sequence belongs to the eukaryotic cobalamin transport proteins family. Interacts with CUBN (via CUB domains). In terms of tissue distribution, gastric mucosa.

It is found in the secreted. Functionally, promotes absorption of the essential vitamin cobalamin (Cbl) in the ileum. After interaction with CUBN, the CBLIF-cobalamin complex is internalized via receptor-mediated endocytosis. The sequence is that of Cobalamin binding intrinsic factor from Homo sapiens (Human).